Reading from the N-terminus, the 393-residue chain is Glutamate 5-kinase 1 (393 aa).

An ATP-binding site is contributed by K17. Residues S57, D144, and N156 each coordinate substrate. S176–D177 lines the ATP pocket. The region spanning A282–A359 is the PUA domain.

This sequence belongs to the glutamate 5-kinase family.

It localises to the cytoplasm. It catalyses the reaction L-glutamate + ATP = L-glutamyl 5-phosphate + ADP. It functions in the pathway amino-acid biosynthesis; L-proline biosynthesis; L-glutamate 5-semialdehyde from L-glutamate: step 1/2. Catalyzes the transfer of a phosphate group to glutamate to form L-glutamate 5-phosphate. This Rhizobium meliloti (strain 1021) (Ensifer meliloti) protein is Glutamate 5-kinase 1.